We begin with the raw amino-acid sequence, 137 residues long: Acidic phospholipase A2 PL-I (137 aa).

A signal peptide spans 1–17 (AVCVSLLGASSIRPLPL). 7 disulfides stabilise this stretch: Cys28-Cys89, Cys44-Cys136, Cys46-Cys62, Cys61-Cys117, Cys68-Cys110, Cys78-Cys103, and Cys96-Cys108. Residues Tyr45, Gly47, and Gly49 each coordinate Ca(2+). The active site involves His65. Asp66 contacts Ca(2+). The active site involves Asp111.

Ca(2+) serves as cofactor. Expressed by the venom gland.

It localises to the secreted. It carries out the reaction a 1,2-diacyl-sn-glycero-3-phosphocholine + H2O = a 1-acyl-sn-glycero-3-phosphocholine + a fatty acid + H(+). In terms of biological role, snake venom phospholipase A2 (PLA2) that may act in the hemostasis system of the prey. Exhibits hydrolytic activities, and prefers the anionic micelles (dPPC with deoxycholate) (793 umol/mg/min) to the zwitterionic micelles (dPPC with Triton X-100) (591 umol/mg/min). PLA2 catalyzes the calcium-dependent hydrolysis of the 2-acyl groups in 3-sn-phosphoglycerides. In Walterinnesia aegyptia (Desert black snake), this protein is Acidic phospholipase A2 PL-I.